Here is a 102-residue protein sequence, read N- to C-terminus: NADH-quinone oxidoreductase subunit K (102 aa).

3 helical membrane passes run 5-25 (ITHYLIVSALIFTIGIAGIFL), 31-51 (IIILMSIELILLSVNLNFVAF), and 66-86 (FILTVAAAEAAIGLAILVVFF).

Belongs to the complex I subunit 4L family. In terms of assembly, NDH-1 is composed of 14 different subunits. Subunits NuoA, H, J, K, L, M, N constitute the membrane sector of the complex.

Its subcellular location is the cell inner membrane. The enzyme catalyses a quinone + NADH + 5 H(+)(in) = a quinol + NAD(+) + 4 H(+)(out). NDH-1 shuttles electrons from NADH, via FMN and iron-sulfur (Fe-S) centers, to quinones in the respiratory chain. The immediate electron acceptor for the enzyme in this species is believed to be ubiquinone. Couples the redox reaction to proton translocation (for every two electrons transferred, four hydrogen ions are translocated across the cytoplasmic membrane), and thus conserves the redox energy in a proton gradient. The protein is NADH-quinone oxidoreductase subunit K of Bartonella quintana (strain Toulouse) (Rochalimaea quintana).